We begin with the raw amino-acid sequence, 472 residues long: Glutamate--tRNA ligase (472 aa).

A 'HIGH' region motif is present at residues 7 to 17; the sequence is PSPTGFLHVGG. Zn(2+) is bound by residues C96, C98, C123, and H125. Basic and acidic residues predominate over residues 112-129; sequence ARKEKPRYDGRCRHRSEP. The tract at residues 112–134 is disordered; sequence ARKEKPRYDGRCRHRSEPPSDQP. The 'KMSKS' region motif lies at 234–238; it reads KLSKR. Residue K237 coordinates ATP.

This sequence belongs to the class-I aminoacyl-tRNA synthetase family. Glutamate--tRNA ligase type 1 subfamily. Monomer. It depends on Zn(2+) as a cofactor.

The protein localises to the cytoplasm. The catalysed reaction is tRNA(Glu) + L-glutamate + ATP = L-glutamyl-tRNA(Glu) + AMP + diphosphate. In terms of biological role, catalyzes the attachment of glutamate to tRNA(Glu) in a two-step reaction: glutamate is first activated by ATP to form Glu-AMP and then transferred to the acceptor end of tRNA(Glu). In Magnetococcus marinus (strain ATCC BAA-1437 / JCM 17883 / MC-1), this protein is Glutamate--tRNA ligase.